Reading from the N-terminus, the 155-residue chain is Transcription antitermination protein NusB (155 aa).

The protein belongs to the NusB family.

Its function is as follows. Involved in transcription antitermination. Required for transcription of ribosomal RNA (rRNA) genes. Binds specifically to the boxA antiterminator sequence of the ribosomal RNA (rrn) operons. The sequence is that of Transcription antitermination protein NusB from Ralstonia nicotianae (strain ATCC BAA-1114 / GMI1000) (Ralstonia solanacearum).